The following is a 317-amino-acid chain: 4-hydroxy-3-methylbut-2-enyl diphosphate reductase (317 aa).

Residue cysteine 12 coordinates [4Fe-4S] cluster. (2E)-4-hydroxy-3-methylbut-2-enyl diphosphate contacts are provided by histidine 41 and histidine 74. Dimethylallyl diphosphate-binding residues include histidine 41 and histidine 74. Isopentenyl diphosphate contacts are provided by histidine 41 and histidine 74. Cysteine 97 is a [4Fe-4S] cluster binding site. Histidine 125 provides a ligand contact to (2E)-4-hydroxy-3-methylbut-2-enyl diphosphate. Residue histidine 125 participates in dimethylallyl diphosphate binding. Histidine 125 is an isopentenyl diphosphate binding site. Glutamate 127 acts as the Proton donor in catalysis. Threonine 168 is a (2E)-4-hydroxy-3-methylbut-2-enyl diphosphate binding site. Residue cysteine 198 participates in [4Fe-4S] cluster binding. Serine 226, serine 227, asparagine 228, and serine 270 together coordinate (2E)-4-hydroxy-3-methylbut-2-enyl diphosphate. The dimethylallyl diphosphate site is built by serine 226, serine 227, asparagine 228, and serine 270. Residues serine 226, serine 227, asparagine 228, and serine 270 each contribute to the isopentenyl diphosphate site.

The protein belongs to the IspH family. In terms of assembly, homodimer. Requires [4Fe-4S] cluster as cofactor.

It carries out the reaction isopentenyl diphosphate + 2 oxidized [2Fe-2S]-[ferredoxin] + H2O = (2E)-4-hydroxy-3-methylbut-2-enyl diphosphate + 2 reduced [2Fe-2S]-[ferredoxin] + 2 H(+). The catalysed reaction is dimethylallyl diphosphate + 2 oxidized [2Fe-2S]-[ferredoxin] + H2O = (2E)-4-hydroxy-3-methylbut-2-enyl diphosphate + 2 reduced [2Fe-2S]-[ferredoxin] + 2 H(+). The protein operates within isoprenoid biosynthesis; dimethylallyl diphosphate biosynthesis; dimethylallyl diphosphate from (2E)-4-hydroxy-3-methylbutenyl diphosphate: step 1/1. It participates in isoprenoid biosynthesis; isopentenyl diphosphate biosynthesis via DXP pathway; isopentenyl diphosphate from 1-deoxy-D-xylulose 5-phosphate: step 6/6. In terms of biological role, catalyzes the conversion of 1-hydroxy-2-methyl-2-(E)-butenyl 4-diphosphate (HMBPP) into a mixture of isopentenyl diphosphate (IPP) and dimethylallyl diphosphate (DMAPP). Acts in the terminal step of the DOXP/MEP pathway for isoprenoid precursor biosynthesis. The protein is 4-hydroxy-3-methylbut-2-enyl diphosphate reductase of Yersinia pestis bv. Antiqua (strain Antiqua).